Here is a 102-residue protein sequence, read N- to C-terminus: MASEQYQAMRNAPQEEKEELDARAKQGETVVPGGTRGKSLDAQINLAEGRHKGGETRKQQLGTEGYQEMGRKGGLSNSDMSGGERAADEGVTIDESKFRTKN.

A disordered region spans residues 1 to 102; that stretch reads MASEQYQAMR…IDESKFRTKN (102 aa). Basic and acidic residues predominate over residues 48-58; that stretch reads EGRHKGGETRK.

Belongs to the small hydrophilic plant seed protein family.

In terms of biological role, LEA proteins are late embryonic proteins abundant in higher plant seed embryos. There are two subsets of LEA proteins (5a and 5b), the first ones are expressed when the cotyledon weight reach 80 mg and the second set are expressed above 100 mg. The function of those proteins is not known. This is Late embryogenesis abundant protein D-19 from Gossypium hirsutum (Upland cotton).